The chain runs to 418 residues: Tyrosine--tRNA ligase (418 aa).

Tyr-34 provides a ligand contact to L-tyrosine. The 'HIGH' region signature appears at 39–48 (PTADSLHLGH). L-tyrosine is bound by residues Tyr-169 and Gln-173. The 'KMSKS' region motif lies at 229-233 (KFGKS). Position 232 (Lys-232) interacts with ATP. Residues 352 to 418 (NNIVELLVSS…GKKKYFVLTY (67 aa)) enclose the S4 RNA-binding domain.

The protein belongs to the class-I aminoacyl-tRNA synthetase family. TyrS type 1 subfamily. As to quaternary structure, homodimer.

Its subcellular location is the cytoplasm. It catalyses the reaction tRNA(Tyr) + L-tyrosine + ATP = L-tyrosyl-tRNA(Tyr) + AMP + diphosphate + H(+). Catalyzes the attachment of tyrosine to tRNA(Tyr) in a two-step reaction: tyrosine is first activated by ATP to form Tyr-AMP and then transferred to the acceptor end of tRNA(Tyr). This is Tyrosine--tRNA ligase from Streptococcus pneumoniae (strain ATCC BAA-255 / R6).